Reading from the N-terminus, the 324-residue chain is Quinolinate synthase 1 (324 aa).

The iminosuccinate site is built by His-48 and Ser-66. Cys-111 serves as a coordination point for [4Fe-4S] cluster. Residues 137–139 (YVN) and Ser-154 each bind iminosuccinate. Cys-196 contributes to the [4Fe-4S] cluster binding site. Iminosuccinate is bound by residues 222–224 (HPE) and Thr-239. Cys-282 provides a ligand contact to [4Fe-4S] cluster.

Belongs to the quinolinate synthase family. Type 2 subfamily. Requires [4Fe-4S] cluster as cofactor.

Its subcellular location is the cytoplasm. The catalysed reaction is iminosuccinate + dihydroxyacetone phosphate = quinolinate + phosphate + 2 H2O + H(+). It functions in the pathway cofactor biosynthesis; NAD(+) biosynthesis; quinolinate from iminoaspartate: step 1/1. Functionally, catalyzes the condensation of iminoaspartate with dihydroxyacetone phosphate to form quinolinate. This is Quinolinate synthase 1 from Mesorhizobium japonicum (strain LMG 29417 / CECT 9101 / MAFF 303099) (Mesorhizobium loti (strain MAFF 303099)).